The chain runs to 672 residues: DNA ligase (672 aa).

NAD(+)-binding positions include 32–36 (DEKYD), 82–83 (SL), and glutamate 113. Lysine 115 functions as the N6-AMP-lysine intermediate in the catalytic mechanism. The NAD(+) site is built by arginine 136, glutamate 173, lysine 290, and lysine 314. Zn(2+) is bound by residues cysteine 408, cysteine 411, cysteine 427, and cysteine 433. In terms of domain architecture, BRCT spans 592-672 (DNNNTLFRKK…EFLNIINVYL (81 aa)).

The protein belongs to the NAD-dependent DNA ligase family. LigA subfamily. It depends on Mg(2+) as a cofactor. The cofactor is Mn(2+).

The enzyme catalyses NAD(+) + (deoxyribonucleotide)n-3'-hydroxyl + 5'-phospho-(deoxyribonucleotide)m = (deoxyribonucleotide)n+m + AMP + beta-nicotinamide D-nucleotide.. In terms of biological role, DNA ligase that catalyzes the formation of phosphodiester linkages between 5'-phosphoryl and 3'-hydroxyl groups in double-stranded DNA using NAD as a coenzyme and as the energy source for the reaction. It is essential for DNA replication and repair of damaged DNA. The sequence is that of DNA ligase from Buchnera aphidicola subsp. Baizongia pistaciae (strain Bp).